A 733-amino-acid chain; its full sequence is 1,4-alpha-glucan branching enzyme GlgB (733 aa).

Aspartate 409 serves as the catalytic Nucleophile. The active-site Proton donor is glutamate 462.

The protein belongs to the glycosyl hydrolase 13 family. GlgB subfamily. Monomer.

The catalysed reaction is Transfers a segment of a (1-&gt;4)-alpha-D-glucan chain to a primary hydroxy group in a similar glucan chain.. It participates in glycan biosynthesis; glycogen biosynthesis. In terms of biological role, catalyzes the formation of the alpha-1,6-glucosidic linkages in glycogen by scission of a 1,4-alpha-linked oligosaccharide from growing alpha-1,4-glucan chains and the subsequent attachment of the oligosaccharide to the alpha-1,6 position. This chain is 1,4-alpha-glucan branching enzyme GlgB, found in Gloeobacter violaceus (strain ATCC 29082 / PCC 7421).